Consider the following 2261-residue polypeptide: Phospholipid-transporting ATPase ABCA1 (2261 aa).

Cys3 carries S-palmitoyl cysteine lipidation. Asn14 is a glycosylation site (N-linked (GlcNAc...) asparagine). A helical membrane pass occupies residues 22 to 42 (TCQLLLEVAWPLFIFLILISV). A lipid anchor (S-palmitoyl cysteine) is attached at Cys23. The Extracellular segment spans residues 43–639 (RLSYPPYEQH…DIFLRVMSRS (597 aa)). An annulus domain 1 region spans residues 69–80 (WVQGIICNANNP). Cysteines 75 and 309 form a disulfide. Residues Asn98, Asn151, Asn161, Asn196, Asn244, Asn292, Asn337, and Asn349 are each glycosylated (N-linked (GlcNAc...) asparagine). Residues 368-379 (SRIIWKALKPLL) form an annulus domain 2 region. Residues Asn400, Asn478, Asn489, and Asn521 are each glycosylated (N-linked (GlcNAc...) asparagine). Positions 564–594 (ERTNKIKDGYWDPGPRADPFEDMRYVWGGFA) are gateway domain. The next 5 membrane-spanning stretches (helical) occupy residues 640–660 (MPLFMTLAWIYSVAVIIKGIV), 683–703 (FSWFISSLIPLLVSAGLLVVI), 716–736 (SVVFVFLSVFAVVTILQCFLI), 745–765 (LAAACGGIIYFTLYLPYVLCV), and 777–797 (IFASLLSPVAFGFGCEYFALF). Asn820 carries an N-linked (GlcNAc...) asparagine glycan. The helical transmembrane segment at 827–847 (MMLFDTFLYGVMTWYIEAVFP) threads the bilayer. The 233-residue stretch at 899–1131 (VSIQNLVKVY…LGTGYYLTLV (233 aa)) folds into the ABC transporter 1 domain. An ATP-binding site is contributed by 933–940 (GHNGAGKT). Residues 1041–1057 (LSVALAFVGGSKVVILD) form a helical membrane-spanning segment. Position 1042 is a phosphoserine; by PKA (Ser1042). 2 S-palmitoyl cysteine lipidation sites follow: Cys1110 and Cys1111. Asn1144 and Asn1294 each carry an N-linked (GlcNAc...) asparagine glycan. A disordered region spans residues 1283 to 1312 (RPFTEDDAADPNDSDIDPESRETDLLSGMD). Residues 1287–1299 (EDDAADPNDSDID) show a composition bias toward acidic residues. Phosphoserine is present on Ser1296. Residues 1351 to 1371 (IVLPAVFVCIALVFSLIVPPF) form a helical membrane-spanning segment. Topologically, residues 1372–1656 (GKYPSLELQP…ALMTTSVDVL (285 aa)) are extracellular. N-linked (GlcNAc...) asparagine glycosylation is present at Asn1453. Residues Cys1463 and Cys1477 are joined by a disulfide bond. N-linked (GlcNAc...) asparagine glycans are attached at residues Asn1504 and Asn1637. A run of 6 helical transmembrane segments spans residues 1657–1677 (VSICVIFAMSFVPASFVVFLI), 1703–1723 (FVWDMCNYVVPATLVIIIFIC), 1735–1755 (LPVLALLLLLYGWSITPLMYP), 1768–1788 (VVLTSVNLFIGINGSVATFVL), 1802–1822 (ILKSVFLIFPHFCLGRGLIDM), and 1852–1872 (NLFAMAVEGVVFFLITVLIQY). An ABC transporter 2 domain is found at 1912–2144 (LEIKELTKIY…FGDGYTIVVR (233 aa)). 1946–1953 (GVNGAGKS) serves as a coordination point for ATP. N-linked (GlcNAc...) asparagine glycosylation is present at Asn2044. Ser2054 is subject to Phosphoserine; by PKA. Asn2238 is a glycosylation site (N-linked (GlcNAc...) asparagine).

Belongs to the ABC transporter superfamily. ABCA family. In terms of assembly, interacts with MEGF10. May interact with APOE1; functionally associated with APOE1 in the biogenesis of HDLs. Interacts with ABCA8; this interaction potentiates cholesterol efflux. Interacts with ABCA12 and NR1H2; this interaction is required for ABCA1 localization to the cell surface and is necessary for its normal activity and stability. In terms of processing, phosphorylation on Ser-2054 regulates phospholipid efflux. Post-translationally, palmitoylated by ZDHHC8. Palmitoylation is essential for localization to the plasma membrane. Widely expressed, but most abundant in macrophages.

The protein resides in the cell membrane. Its subcellular location is the endosome. It catalyses the reaction ATP + H2O + phospholipidSide 1 = ADP + phosphate + phospholipidSide 2.. The catalysed reaction is a 1,2-diacyl-sn-glycero-3-phosphocholine(out) + ATP + H2O = a 1,2-diacyl-sn-glycero-3-phosphocholine(in) + ADP + phosphate + H(+). The enzyme catalyses a 1,2-diacyl-sn-glycero-3-phospho-L-serine(out) + ATP + H2O = a 1,2-diacyl-sn-glycero-3-phospho-L-serine(in) + ADP + phosphate + H(+). It carries out the reaction a sphingomyelin(in) + ATP + H2O = a sphingomyelin(out) + ADP + phosphate + H(+). It catalyses the reaction cholesterol(in) + ATP + H2O = cholesterol(out) + ADP + phosphate + H(+). With respect to regulation, ATPase activity is decreased by cholesterol and ceramide. ATPase activity is stimulated by phosphatidylcholine and to a lesser degree by phosphatidylserine and sphingomyelin. Phospholipid translocase activity is highly reduced by berylium fluoride and aluminum flouride and reduced by N-ethylmaleimide. Functionally, catalyzes the translocation of specific phospholipids from the cytoplasmic to the extracellular/lumenal leaflet of membrane coupled to the hydrolysis of ATP. Thereby, participates in phospholipid transfer to apolipoproteins to form nascent high density lipoproteins/HDLs. Transports preferentially phosphatidylcholine over phosphatidylserine. May play a similar role in the efflux of intracellular cholesterol to apolipoproteins and the formation of nascent high density lipoproteins/HDLs. Translocates phospholipids from the outer face of the plasma membrane and forces it through its gateway and annulus into an elongated hydrophobic tunnel in its extracellular domain. The protein is Phospholipid-transporting ATPase ABCA1 of Homo sapiens (Human).